The following is a 343-amino-acid chain: Nuclear hormone receptor family member nhr-167 (343 aa).

Residues 5–81 (HQKCAVCGRF…VGMTLPSYLL (77 aa)) constitute a DNA-binding region (nuclear receptor). 2 consecutive NR C4-type zinc fingers follow at residues 8–28 (CAVC…CNSC) and 45–64 (CFRG…CTSC). The 239-residue stretch at 101 to 339 (THNKRMDSLF…KKLVKDGIEA (239 aa)) folds into the NR LBD domain.

The protein belongs to the nuclear hormone receptor family.

It is found in the nucleus. Its function is as follows. Orphan nuclear receptor. The sequence is that of Nuclear hormone receptor family member nhr-167 (nhr-167) from Caenorhabditis elegans.